The sequence spans 622 residues: WD repeat-containing protein 70 (622 aa).

Residues Thr37–Ile55 are compositionally biased toward basic and acidic residues. The segment at Thr37–Ser141 is disordered. Over residues Ser67–Glu84 the composition is skewed to low complexity. Residues Ser120 to Asp132 show a composition bias toward acidic residues. WD repeat units follow at residues His148–Gln187, Cys195–Lys236, Gly249–Gly289, Gly298–Phe337, Thr344–Asn383, Ala389–Glu434, and Val437–Ala476. A compositionally biased stretch (basic and acidic residues) spans Arg508–Glu533. Disordered stretches follow at residues Arg508 to Gly549 and Ala602 to Ile622. Residues Pro539–Gly549 show a composition bias toward gly residues. Acidic residues predominate over residues Val604 to Glu614.

It belongs to the WD repeat GAD-1 family.

This chain is WD repeat-containing protein 70 (wdr70), found in Xenopus tropicalis (Western clawed frog).